The chain runs to 418 residues: MGGEAGCAAAVGAEGRVKSLGLVFEDERKGCYSSGETVAGHVLLEASEPVALRALRLEAQGRATAAWGPSTCPRASASTAALAVFSEVEYLNVRLSLREPPAGEGIILLQPGKHEFPFRFQLPSEPLVTSFTGKYGSIQYCVRAVLERPKVPDQSVKRELQVVSHVDVNTPALLTPVLKTQEKMVGCWFFTSGPVSLSAKIERKGYCNGEAIPIYAEIENCSSRLIVPKAAIFQTQTYLASGKTKTIRHMVANVRGNHIASGSTDTWNGKTLKIPPVTPSILDCCIIRVDYSLAVYIHIPGAKKLMLELPLVIGTIPYNGFGSRNSSIASQFSMDMSWLTLTLPEQPEAPPNYADVVSEEEFSRHIPPYPQPPNCEGEVCCPVFACIQEFRFQPPPLYSEVDPHPSDVEESQPVSFIL.

2 consecutive short sequence motifs (PPxY motif) follow at residues 350–353 (PPNY) and 395–398 (PPLY).

Belongs to the arrestin family. Interacts with ADRB2. Interacts (via PPxY motifs) with ITCH, NEDD4L and WWP2. Interacts with AVPR2. Identified in a complex containing at least ARRDC4, AVPR2 and HGS. Interacts with SLC11A2; controls the incorporation of SLC11A2 into extracellular vesicles through an ubiquitination-dependent mechanism. Interacts with TRIM65.

The protein resides in the early endosome. Its subcellular location is the cell membrane. It localises to the cytoplasmic vesicle. Functions as an adapter recruiting ubiquitin-protein ligases to their specific substrates. Plays a role in endocytosis of activated G protein-coupled receptors (GPCRs). Through an ubiquitination-dependent mechanism also plays a role in the incorporation of SLC11A2 into extracellular vesicles. May play a role in glucose uptake. Participates in innate immune response by promoting IFIH1/MDA5 activation through interaction with TRIM65. This is Arrestin domain-containing protein 4 (ARRDC4) from Homo sapiens (Human).